The chain runs to 108 residues: U-scoloptoxin(16)-Sm1a (108 aa).

The first 19 residues, 1–19 (MNLFLVLFVFSFSVSQFFA), serve as a signal peptide directing secretion.

Belongs to the scoloptoxin-16 family. Contains 4 disulfide bonds. In terms of tissue distribution, expressed by the venom gland.

Its subcellular location is the secreted. This chain is U-scoloptoxin(16)-Sm1a, found in Scolopendra morsitans (Tanzanian blue ringleg centipede).